The chain runs to 599 residues: Nucleosomal histone kinase 1 (599 aa).

The Protein kinase domain maps to 47–328; it reads WRIGPSIGVG…PDYDKCRSWF (282 aa). Residues 53–61 and Lys-77 each bind ATP; that span reads IGVGGFGEI. Asp-183 functions as the Proton acceptor in the catalytic mechanism. Disordered stretches follow at residues 340 to 507 and 532 to 599; these read NGDL…PQPR and RKKK…KYQG. Polar residues predominate over residues 349-361; it reads PQTSSNNNLSPPG. Residues Ser-376, Ser-381, Ser-382, Ser-388, and Ser-390 each carry the phosphoserine modification. The segment covering 435–448 has biased composition (basic and acidic residues); the sequence is VKTEPKSTPRERAT. Ser-483 carries the phosphoserine modification. A compositionally biased stretch (low complexity) spans 546–558; that stretch reads SRTPSSRSALASS. Residues Ser-564 and Ser-586 each carry the phosphoserine modification. Thr-589 carries the post-translational modification Phosphothreonine.

This sequence belongs to the protein kinase superfamily. CK1 Ser/Thr protein kinase family. VRK subfamily. In terms of assembly, may interact with Unc-89 (via protein kinase domain 1). Interacts with L(2)gl. It depends on Mg(2+) as a cofactor. Phosphorylated during mitosis and female meiosis. In terms of tissue distribution, expressed in ovaries (at protein level). Expressed in indirect flight muscle (IFM) (at protein level).

It is found in the cytoplasm. It localises to the nucleus. The protein localises to the chromosome. Its subcellular location is the myofibril. The protein resides in the sarcomere. It is found in the z line. It localises to the m line. It catalyses the reaction L-seryl-[protein] + ATP = O-phospho-L-seryl-[protein] + ADP + H(+). The enzyme catalyses L-threonyl-[protein] + ATP = O-phospho-L-threonyl-[protein] + ADP + H(+). In terms of biological role, serine/threonine-protein kinase involved in somatic mitosis and female meiosis. Required for spindle organization in mitosis, and for the establishment or maintenance of meiosis-specific chromosomal configurations, including the prophase I karyosome and the metaphase I spindle. Specifically phosphorylates nucleosomal H2A on 'Thr-119'. Required for the development and organization of indirect flight muscle sarcomeres by regulating the formation of M line and H zone and the correct assembly of thick and thin filaments in the sarcomere. This is Nucleosomal histone kinase 1 (ball) from Drosophila melanogaster (Fruit fly).